The primary structure comprises 271 residues: Aquaporin-11 (271 aa).

Residues 1–14 are Cytoplasmic-facing; it reads MSALLGLPPEVQDT. Residues 15 to 35 form a helical membrane-spanning segment; the sequence is CISLGLMLLVVLFMGLARVIA. The Lumenal segment spans residues 36 to 41; it reads RQQLHR. The helical transmembrane segment at 42 to 62 threads the bilayer; that stretch reads PMVHAFVLEFLATFQLCYCTH. At 63–76 the chain is on the cytoplasmic side; the sequence is ELQLLSEQDSGHPT. A helical membrane pass occupies residues 77 to 97; sequence WTLTLIYFFSLVHGLTLVGTA. Residues 98 to 166 are Lumenal-facing; it reads SNPCGVMMQM…NPINTDISKA (69 aa). The short motif at 99–101 is the NPC element; sequence NPC. Residues 167 to 187 traverse the membrane as a helical segment; it reads IIIEAICSFIFHSALLHFQEV. The Cytoplasmic portion of the chain corresponds to 188 to 194; that stretch reads RTKLRIH. The helical transmembrane segment at 195 to 215 threads the bilayer; it reads VLAALITFLAYAGGSLTGALF. An NPA motif is present at residues 216-218; it reads NPA. Over 216–234 the chain is Lumenal; that stretch reads NPALALSLHFPCFDESFYK. The chain crosses the membrane as a helical span at residues 235–255; that stretch reads FFVVYWVAPSLGVLLMILMFS. The Cytoplasmic portion of the chain corresponds to 256–271; it reads FFLPWLHNNQLSNKKE.

The protein belongs to the MIP/aquaporin (TC 1.A.8) family. AQP11/AQP12 subfamily. In terms of assembly, homodimer; disulfide-linked. Homotetramer. Can also form homomultimer. Post-translationally, not glycosylated. As to expression, expressed in retina specifically at retinal Mueller glial cells. Expressed in adult testis, in the elongated spermatids (ES) and in residual bodies inside Sertoli cells.

It localises to the endoplasmic reticulum membrane. The protein localises to the cytoplasmic vesicle membrane. Its subcellular location is the cell membrane. The enzyme catalyses H2O(in) = H2O(out). It catalyses the reaction glycerol(in) = glycerol(out). It carries out the reaction H2O2(out) = H2O2(in). In terms of biological role, channel protein that facilitates the transport of water, glycerol and hydrogen peroxide across membrane of cell or organelles guaranteeing intracellular homeostasis in several organes like liver, kidney and brain. In situation of stress, participates in endoplasmic reticulum (ER) homeostasis by regulating redox homeostasis through the transport of hydrogen peroxide across the endoplasmic reticulum membrane thereby regulating the oxidative stress through the NADPH oxidase 2 pathway. Plays a role by maintaining an environment suitable for translation or protein foldings in the ER lumen namely by participating in the PKD1 glycosylation processing resulting in regulation of PKD1 membrane trafficking thereby preventing the accumulation of unfolding protein in ER. Plays a role in the proximal tubule function by regulating its endosomal acidification. May play a role in postnatal kidney development. This chain is Aquaporin-11, found in Rattus norvegicus (Rat).